Reading from the N-terminus, the 529-residue chain is Transcription factor BIM1 (529 aa).

Disordered stretches follow at residues 1 to 91 (MELP…HVLP), 245 to 291 (KKES…RRSK), 425 to 450 (RVASSEAVEPSPSSRSQKEEEDEEVL), and 491 to 529 (AKQSSSSSFKDHEVREPVSRTRNDNVKQTRKPKRLKTGQ). Over residues 76-86 (KPPPPAPPPPL) the composition is skewed to pro residues. Composition is skewed to basic and acidic residues over residues 255–265 (HRVDLRVKADV) and 282–291 (SATEQRRRSK). Residues 276–326 (TPRSKHSATEQRRRSKINDRFQMLRQLIPNSDQKRDKASFLLEVIEYIQFL) enclose the bHLH domain. A compositionally biased stretch (low complexity) spans 426–438 (VASSEAVEPSPSS). The span at 499–517 (FKDHEVREPVSRTRNDNVK) shows a compositional bias: basic and acidic residues. The segment covering 518 to 529 (QTRKPKRLKTGQ) has biased composition (basic residues).

Homodimer. Interacts with BZR2/BES1 through both C-terminal and bHLH domains. Also interacts with LHW. As to expression, expressed constitutively in roots.

The protein resides in the nucleus. Positive brassinosteroid-signaling protein. Transcription factor that bind specifically to the DNA sequence 5'-CANNTG-3'(E box). Can bind individually to the promoter as a homodimer or synergistically as a heterodimer with BZR2/BES1. Does not itself activate transcription but enhances BZR2/BES1-mediated target gene activation. This Arabidopsis thaliana (Mouse-ear cress) protein is Transcription factor BIM1 (BIM1).